The sequence spans 1436 residues: MIKKIKNIINKIINFFSTIYILCKIYLYYNIKNRYEAYNILSVYGDDDFFNKPCPEDSSNWKDKLTFKWVERIIFVGFFRAPLNLNDISDLPSSLKVENTAPLLKDIIFNDSTIPLIKHIYSKFLPRNYIATGLFVFVSVFSFITPLILKNFLSYVEKIDEQKHIYIGIIQCFLLFLSSFINMASQQYSYWFGFKTSLEVKGALETIIFEKMTKLSNLSKKNYNIGSMLNLMSVDTDFFQYFFCHYYIEIFLFPIQILSLLGFLIYVIGIAGFVGFLVMLITIPLSSFLGTQISKNLSTSMGYADTRISLTGELINGIKFLKQYAWEKMFCERIEEQRKLQLKYLYIRIIYWVLVQIVTQASSGLVLVSTFTTYTLLGYEVSLEIAFTSITILQNLRRPIESLPDCLHKFISLIASAKRIETFLQSSELQNQPFIHNQSGLNDILIRNINFNWNEHNLKLKNNKNNQNNNQNKRSIILSSGEQFEITNDFTFDGIDIQDDNYDYEKEYKINYNNNEEEENFMTDCLLKIKPLIKDRRLQQQQADYQDLLSINLPPPPSENVDFKAPKGLLTIISGGVRSGKTSLASGLLGEICKAVDKSSPDSVNSILSTIQQPFLQSTSFRENILFGKPMNMERYIKVIEACCLAPDLLAMGEGKDLTEIGERGINLSNGLKHRIQLARALYADSDCYILDEILSSVDPEIANYIFQHCIKGMMKGKTVILVTHQIQFISSADHVVVVDNGVLIQGTYLELLRMGIDFEMILKEKENRIEKQIVQLQEDEDYYEEVEILDFTMNNNNNNNNNNNNNNSNFNGNNKLKRSSISLPKGISIESIISKDFDQTTIEKAKLFVQEDRNKGDPGWIIYKKYIRMGSSISFFIFTCIIYLTSQIILLLSDYWLQSWASHDRLNVSEPTDVHYLLIYLAYIGGFVFTLGVRYLLIAKITFGSAETLHRSLLKSIIRAPLTFFEQNPVGRILNRFGKDISDIDILLLDCFSDVLYCGACLVTSIGIIIYISPYIAIPFVILIAINYIFQLFYNYSVLELKRIQSISRSPVYSLLSEVYNGLTTIRSFGQQERFFNMMKDNININLRVFFYNFAVSRWIGIRVEFLSAIVVLMSALFSIFNDNPGLSALGVTTALGITFNLNWFMRQFGELESRINSVERVQSYISIPKEKETNEDEFIQTGFIWPSRGEIEFKNVEIRYRPNSIATLRNFSMKINAQERIGIIGRSGSGKSTIGMSLFRMIECSSGSILIDGDDISQIDLKRLRSSIGIVPQDPFIFSGSIRLNLDPFDQFTDNEIWEALSKVKLKKMVSTMPMKLESLVQGGDGLTIGNKQLLCLCRAILRNSKIVLFDEATNSIDFQTTRLIKQTIEENFKDCTILTIAHNIDTILDSDKIAIIDEGELIEFDTPLNLIKDSTSRFSKLIKLNNNQKNKLN.

Transmembrane regions (helical) follow at residues 8-28 (IINK…IYLY), 129-149 (YIAT…PLIL), 165-185 (IYIG…NMAS), 238-258 (FFQY…IQIL), 261-281 (LGFL…VMLI), 349-369 (IIYW…VLVS), and 373-393 (TYTL…ITIL). The 285-residue stretch at 128-412 (NYIATGLFVF…LPDCLHKFIS (285 aa)) folds into the ABC transmembrane type-1 1 domain. Positions 543-766 (ADYQDLLSIN…IDFEMILKEK (224 aa)) constitute an ABC transporter 1 domain. Residue 575–582 (GGVRSGKT) coordinates ATP. The ABC transmembrane type-1 2 domain maps to 865-1155 (KKYIRMGSSI…FMRQFGELES (291 aa)). 6 helical membrane passes run 873–893 (SISF…ILLL), 919–939 (LIYL…YLLI), 985–1005 (IDIL…CLVT), 1017–1039 (IAIP…NYSV), 1101–1121 (IGIR…LFSI), and 1127–1147 (GLSA…NWFM). In terms of domain architecture, ABC transporter 2 spans 1193 to 1426 (IEFKNVEIRY…STSRFSKLIK (234 aa)). 1227-1234 (GRSGSGKS) contributes to the ATP binding site.

Belongs to the ABC transporter superfamily. ABCC family. Conjugate transporter (TC 3.A.1.208) subfamily.

It localises to the membrane. In Dictyostelium discoideum (Social amoeba), this protein is ABC transporter C family member 15 (abcC15).